We begin with the raw amino-acid sequence, 487 residues long: Malonate-semialdehyde dehydrogenase (487 aa).

NAD(+) contacts are provided by Ala-150, Phe-152, Lys-176, Glu-179, Arg-180, Ser-229, and Thr-251. The Nucleophile role is filled by Cys-284. Residue Glu-382 participates in NAD(+) binding.

This sequence belongs to the aldehyde dehydrogenase family. IolA subfamily. In terms of assembly, homotetramer.

It carries out the reaction 3-oxopropanoate + NAD(+) + CoA + H2O = hydrogencarbonate + acetyl-CoA + NADH + H(+). The enzyme catalyses 2-methyl-3-oxopropanoate + NAD(+) + CoA + H2O = propanoyl-CoA + hydrogencarbonate + NADH + H(+). Its pathway is polyol metabolism; myo-inositol degradation into acetyl-CoA; acetyl-CoA from myo-inositol: step 7/7. Catalyzes the oxidation of malonate semialdehyde (MSA) and methylmalonate semialdehyde (MMSA) into acetyl-CoA and propanoyl-CoA, respectively. Is involved in a myo-inositol catabolic pathway. Bicarbonate, and not CO2, is the end-product of the enzymatic reaction. This is Malonate-semialdehyde dehydrogenase from Bacillus subtilis subsp. natto.